The chain runs to 363 residues: Crh-like protein 3 (363 aa).

An N-terminal signal peptide occupies residues 1–19; it reads MSLLYLVALFVASICSVTA. C25 and C32 are joined by a disulfide. One can recognise a GH16 domain in the interval 26 to 237; it reads NPLTTTCPPD…YSKAPFTMVL (212 aa). N-linked (GlcNAc...) asparagine glycosylation is found at N41, N47, and N56. E118 serves as the catalytic Nucleophile. E122 (proton donor) is an active-site residue. Residue E122 participates in chitin binding. N-linked (GlcNAc...) asparagine glycans are attached at residues N127, N141, and N161. Residues R203, W207, and T218 each contribute to the chitin site. Residues N252 and N269 are each glycosylated (N-linked (GlcNAc...) asparagine). A helical membrane pass occupies residues 298–318; the sequence is VYIGAGCVGAALLAGFIFFFI.

Belongs to the glycosyl hydrolase 16 family. CRH1 subfamily. In terms of processing, the GPI-like anchor contains a phosphoceramide lipid group. The anchor position has not been determined.

The protein localises to the cell membrane. It localises to the secreted. Its subcellular location is the cell wall. It catalyses the reaction Random endo-hydrolysis of N-acetyl-beta-D-glucosaminide (1-&gt;4)-beta-linkages in chitin and chitodextrins.. Functionally, dual chitinase/transglycosylase that plays a role in cell wall architecture. Chitinase and transglycosylase activities are coupled. Required for the polysaccharide cross-linking at the septa and the cell wall. More specifically, transfers chitin to 1,6-beta-glucan in the cell wall. The chain is Crh-like protein 3 from Aspergillus fumigatus (strain ATCC MYA-4609 / CBS 101355 / FGSC A1100 / Af293) (Neosartorya fumigata).